A 198-amino-acid polypeptide reads, in one-letter code: Pyridoxal 5'-phosphate synthase subunit PdxT (198 aa).

Glycine 49 to serine 51 contacts L-glutamine. Cysteine 81 (nucleophile) is an active-site residue. L-glutamine contacts are provided by residues arginine 113 and isoleucine 141–arginine 142. Active-site charge relay system residues include histidine 177 and glutamate 179.

It belongs to the glutaminase PdxT/SNO family. In the presence of PdxS, forms a dodecamer of heterodimers. Only shows activity in the heterodimer.

The enzyme catalyses aldehydo-D-ribose 5-phosphate + D-glyceraldehyde 3-phosphate + L-glutamine = pyridoxal 5'-phosphate + L-glutamate + phosphate + 3 H2O + H(+). The catalysed reaction is L-glutamine + H2O = L-glutamate + NH4(+). The protein operates within cofactor biosynthesis; pyridoxal 5'-phosphate biosynthesis. Its function is as follows. Catalyzes the hydrolysis of glutamine to glutamate and ammonia as part of the biosynthesis of pyridoxal 5'-phosphate. The resulting ammonia molecule is channeled to the active site of PdxS. The chain is Pyridoxal 5'-phosphate synthase subunit PdxT from Mycobacterium leprae (strain TN).